We begin with the raw amino-acid sequence, 278 residues long: Delta(3,5)-Delta(2,4)-dienoyl-CoA isomerase, peroxisomal (278 aa).

Methionine 1 carries the N-acetylmethionine modification. Substrate is bound by residues 69–73 and glycine 128; that span reads SGIDL. Positions 276 to 278 match the Microbody targeting signal motif; it reads AKL.

This sequence belongs to the enoyl-CoA hydratase/isomerase family. In terms of tissue distribution, expressed in roots, leaves, stems and flowers.

It is found in the peroxisome. The catalysed reaction is a (3E,5Z)-dienoyl-CoA = a (2E,4E)-(5,6-saturated)-dienoyl-CoA. It functions in the pathway lipid metabolism; fatty acid beta-oxidation. Functionally, converts 3,5-dienoyl-CoAs to the corresponding 2,4-dienoyl-CoAs. Involved in degradation of unsaturated fatty acids. In Arabidopsis thaliana (Mouse-ear cress), this protein is Delta(3,5)-Delta(2,4)-dienoyl-CoA isomerase, peroxisomal.